We begin with the raw amino-acid sequence, 269 residues long: MPVVSLADLLESGVHFGHQTRRWNPRMDQYIYTARNGVHIIDLVQTAQLMEDAYEYVRSSTINGKKFLFVGTKRQAAGIISQEAQRCGAHYVNQRWLGGMLTNWETIRKRVDRLKELEALEASGGIDRRGKKEGSMLRRELGKLQKYLGGIKNMRKLPDVVVIVDQRREHNAIHECQKLGIPIIAMLDTNCDPDVVDVPIPANDDAIRSIKLIVGKLADAIYEGRHGQPDVSDDYEEFDEGLDGDNLEVEAAEEVEEAAEAEVAATPEA.

Belongs to the universal ribosomal protein uS2 family.

This Synechocystis sp. (strain ATCC 27184 / PCC 6803 / Kazusa) protein is Small ribosomal subunit protein uS2 (rpsB).